The sequence spans 626 residues: Interferon-induced GTP-binding protein MxC (626 aa).

Residues 40-313 enclose the Dynamin-type G domain; that stretch reads DLNLPAIAVI…LVEHIAKNVP (274 aa). Positions 50-57 are G1 motif; sequence GDQSSGKS. 50-57 lines the GTP pocket; it reads GDQSSGKS. The tract at residues 75–77 is G2 motif; that stretch reads VTR. Residues 151–154 form a G3 motif region; sequence DLPG. Residues 151–155 and 220–223 each bind GTP; these read DLPGI and TKPD. The interval 220–223 is G4 motif; it reads TKPD. The interval 252-255 is G5 motif; sequence KCRG. Positions 534–624 constitute a GED domain; sequence LRETAFHLTS…ALPKVVHSAN (91 aa).

It belongs to the TRAFAC class dynamin-like GTPase superfamily. Dynamin/Fzo/YdjA family.

It localises to the cytoplasm. This chain is Interferon-induced GTP-binding protein MxC (mxc), found in Danio rerio (Zebrafish).